The following is an 849-amino-acid chain: G-type lectin S-receptor-like serine/threonine-protein kinase B120 (849 aa).

An N-terminal signal peptide occupies residues 1-25; sequence MRFFRKTSLYLSLFLYFFLYESSMA. Residues 26–153 enclose the Bulb-type lectin domain; the sequence is ANTIRRGESL…DTDRPIWESF (128 aa). Residues 26–438 lie on the Extracellular side of the membrane; the sequence is ANTIRRGESL…SEVGENRKTK (413 aa). N-linked (GlcNAc...) asparagine glycans are attached at residues Asn-110, Asn-191, Asn-210, Asn-230, Asn-273, and Asn-282. Positions 295–332 constitute an EGF-like; atypical domain; it reads PDSECDQYNRCGKFGICDMKGSNGICSCIHGYEQVSVG. Disulfide bonds link Cys-299–Cys-311 and Cys-305–Cys-320. Residues Asn-333, Asn-349, and Asn-388 are each glycosylated (N-linked (GlcNAc...) asparagine). A PAN domain is found at 346–427; sequence CERNISVGED…GGSSLHIRLA (82 aa). 2 disulfide bridges follow: Cys-381/Cys-402 and Cys-385/Cys-391. Residues 439–459 form a helical membrane-spanning segment; it reads IAVIVAVLVGVILIGIFALLL. Topologically, residues 460 to 849 are cytoplasmic; sequence WRFKRKKDVS…EITSTVVLGR (390 aa). The Protein kinase domain maps to 529 to 814; the sequence is FCKENELGRG…TLAAPRQPTF (286 aa). ATP is bound by residues 535 to 543 and Lys-557; that span reads LGRGGFGPV. Ser-563 bears the Phosphoserine mark. The interval 618 to 635 is caM-binding; the sequence is TKQALIDWKLRFSIIEGI. Asp-654 (proton acceptor) is an active-site residue. Residues Ser-658 and Ser-671 each carry the phosphoserine modification. Thr-688 is subject to Phosphothreonine. Ser-732 and Ser-837 each carry phosphoserine. Phosphothreonine is present on Thr-844.

Belongs to the protein kinase superfamily. Ser/Thr protein kinase family.

The protein localises to the cell membrane. The enzyme catalyses L-seryl-[protein] + ATP = O-phospho-L-seryl-[protein] + ADP + H(+). The catalysed reaction is L-threonyl-[protein] + ATP = O-phospho-L-threonyl-[protein] + ADP + H(+). The sequence is that of G-type lectin S-receptor-like serine/threonine-protein kinase B120 (B120) from Arabidopsis thaliana (Mouse-ear cress).